The primary structure comprises 97 residues: Aspartyl/glutamyl-tRNA(Asn/Gln) amidotransferase subunit C (97 aa).

Belongs to the GatC family. In terms of assembly, heterotrimer of A, B and C subunits.

It catalyses the reaction L-glutamyl-tRNA(Gln) + L-glutamine + ATP + H2O = L-glutaminyl-tRNA(Gln) + L-glutamate + ADP + phosphate + H(+). It carries out the reaction L-aspartyl-tRNA(Asn) + L-glutamine + ATP + H2O = L-asparaginyl-tRNA(Asn) + L-glutamate + ADP + phosphate + 2 H(+). Its function is as follows. Allows the formation of correctly charged Asn-tRNA(Asn) or Gln-tRNA(Gln) through the transamidation of misacylated Asp-tRNA(Asn) or Glu-tRNA(Gln) in organisms which lack either or both of asparaginyl-tRNA or glutaminyl-tRNA synthetases. The reaction takes place in the presence of glutamine and ATP through an activated phospho-Asp-tRNA(Asn) or phospho-Glu-tRNA(Gln). The protein is Aspartyl/glutamyl-tRNA(Asn/Gln) amidotransferase subunit C of Synechococcus sp. (strain JA-3-3Ab) (Cyanobacteria bacterium Yellowstone A-Prime).